The following is a 351-amino-acid chain: UPF0104 membrane protein MTH_887 (351 aa).

Helical transmembrane passes span 20-40 (IVLS…FAGF), 51-71 (SPYF…LWTL), 137-157 (VFEF…IMTW), 165-185 (IVVS…VYAG), 244-264 (FVIG…RLYV), 275-295 (AVPL…PILP), 304-324 (ILVG…AASV), and 328-348 (IASY…YGKQ).

The protein belongs to the UPF0104 family.

The protein localises to the cell membrane. The chain is UPF0104 membrane protein MTH_887 from Methanothermobacter thermautotrophicus (strain ATCC 29096 / DSM 1053 / JCM 10044 / NBRC 100330 / Delta H) (Methanobacterium thermoautotrophicum).